We begin with the raw amino-acid sequence, 284 residues long: Homeobox protein CDX-4 (284 aa).

Disordered regions lie at residues 15 to 40 (PGTL…SPMP) and 120 to 155 (GGGT…SRHS). Positions 22-37 (GGDGTAGTGGTGGGGS) are enriched in gly residues. The homeobox DNA-binding region spans 173–232 (KEKYRVVYTDHQRLELEKEFHCNRYITIQRKSELAVNLGLSERQVKIWFQNRRAKERKMI). The segment covering 238 to 253 (QFENSGGSVQSDSDSI) has biased composition (polar residues). Residues 238–259 (QFENSGGSVQSDSDSISPGELP) are disordered.

The protein belongs to the Caudal homeobox family.

The protein resides in the nucleus. This chain is Homeobox protein CDX-4 (CDX4), found in Homo sapiens (Human).